The chain runs to 234 residues: Purine nucleoside phosphorylase DeoD-type (234 aa).

Residue His5 participates in a purine D-ribonucleoside binding. Phosphate is bound by residues Gly21, Arg25, Arg44, and 88 to 91; that span reads RIGT. A purine D-ribonucleoside-binding positions include 180 to 182 and 204 to 205; these read DME and SD. Catalysis depends on Asp205, which acts as the Proton donor.

It belongs to the PNP/UDP phosphorylase family. Homohexamer; trimer of homodimers.

It catalyses the reaction a purine D-ribonucleoside + phosphate = a purine nucleobase + alpha-D-ribose 1-phosphate. The enzyme catalyses a purine 2'-deoxy-D-ribonucleoside + phosphate = a purine nucleobase + 2-deoxy-alpha-D-ribose 1-phosphate. In terms of biological role, catalyzes the reversible phosphorolytic breakdown of the N-glycosidic bond in the beta-(deoxy)ribonucleoside molecules, with the formation of the corresponding free purine bases and pentose-1-phosphate. This Buchnera aphidicola subsp. Acyrthosiphon pisum (strain APS) (Acyrthosiphon pisum symbiotic bacterium) protein is Purine nucleoside phosphorylase DeoD-type.